Here is a 344-residue protein sequence, read N- to C-terminus: Succinylglutamate desuccinylase (344 aa).

Positions 63, 66, and 160 each coordinate Zn(2+). E224 is a catalytic residue.

Belongs to the AspA/AstE family. Succinylglutamate desuccinylase subfamily. Requires Zn(2+) as cofactor.

It catalyses the reaction N-succinyl-L-glutamate + H2O = L-glutamate + succinate. Its pathway is amino-acid degradation; L-arginine degradation via AST pathway; L-glutamate and succinate from L-arginine: step 5/5. In terms of biological role, transforms N(2)-succinylglutamate into succinate and glutamate. The polypeptide is Succinylglutamate desuccinylase (Shewanella sp. (strain W3-18-1)).